A 572-amino-acid chain; its full sequence is Proline--tRNA ligase (572 aa).

It belongs to the class-II aminoacyl-tRNA synthetase family. ProS type 1 subfamily. In terms of assembly, homodimer.

The protein localises to the cytoplasm. It catalyses the reaction tRNA(Pro) + L-proline + ATP = L-prolyl-tRNA(Pro) + AMP + diphosphate. Catalyzes the attachment of proline to tRNA(Pro) in a two-step reaction: proline is first activated by ATP to form Pro-AMP and then transferred to the acceptor end of tRNA(Pro). As ProRS can inadvertently accommodate and process non-cognate amino acids such as alanine and cysteine, to avoid such errors it has two additional distinct editing activities against alanine. One activity is designated as 'pretransfer' editing and involves the tRNA(Pro)-independent hydrolysis of activated Ala-AMP. The other activity is designated 'posttransfer' editing and involves deacylation of mischarged Ala-tRNA(Pro). The misacylated Cys-tRNA(Pro) is not edited by ProRS. In Haemophilus influenzae (strain 86-028NP), this protein is Proline--tRNA ligase.